The sequence spans 1857 residues: Chitin synthase Y (1857 aa).

Residues 1 to 22 (MVGPSPAGTVPSHAQSSLPSLP) form a disordered region. The Myosin motor domain maps to 1–788 (MVGPSPAGTV…CWADLAKVGE (788 aa)). Residue 102–109 (GESGAGKT) participates in ATP binding. The segment at 601–653 (SSKPLRMPSMARRKASPASRLTFDAPTAEEPEDNESYGGSTAKSSGRRKSAMS) is disordered. N-linked (GlcNAc...) asparagine glycosylation occurs at N634. Positions 668–692 (LEIVNKCLSSPSLNPYFIFCLKPND) are actin-binding. The next 2 helical transmembrane spans lie at 898–918 (WMAI…RLFG) and 937–957 (LIIW…PGLV). A Cytochrome b5 heme-binding domain is found at 961 to 1020 (QHVYSAAELESHNGKNGHDSYIAIRGVVFDLDKFMPRHYPDIVPQSSLKKYAGMDATGLF). Residues N1047 and N1072 are each glycosylated (N-linked (GlcNAc...) asparagine). The chain crosses the membrane as a helical span at residues 1209–1229 (FILAISILICAVVIFKFAAAL). N-linked (GlcNAc...) asparagine glycosylation occurs at N1572. The next 3 helical transmembrane spans lie at 1603 to 1623 (LLST…IVWL), 1630 to 1650 (IPWT…LIFI), and 1657 to 1677 (MIGW…ALPF). One can recognise a DEK-C domain in the interval 1799-1854 (LPSDDAILAEIREILRTADLMTVTKKSIKQELERRFGVNLDAKRPYINSATEAVLS).

In the N-terminal section; belongs to the TRAFAC class myosin-kinesin ATPase superfamily. Myosin family. It in the C-terminal section; belongs to the chitin synthase family. Class V subfamily.

It is found in the cell membrane. It localises to the cell septum. The protein localises to the cell tip. The enzyme catalyses [(1-&gt;4)-N-acetyl-beta-D-glucosaminyl](n) + UDP-N-acetyl-alpha-D-glucosamine = [(1-&gt;4)-N-acetyl-beta-D-glucosaminyl](n+1) + UDP + H(+). In terms of biological role, polymerizes chitin, a structural polymer of the cell wall and septum, by transferring the sugar moiety of UDP-GlcNAc to the non-reducing end of the growing chitin polymer. Specifically involved in hyphal elongation and new cell wall formation. The sequence is that of Chitin synthase Y from Aspergillus oryzae (strain ATCC 42149 / RIB 40) (Yellow koji mold).